The sequence spans 408 residues: Acetate kinase (408 aa).

Asparagine 7 is a binding site for Mg(2+). Residue lysine 14 participates in ATP binding. Arginine 91 contacts substrate. The Proton donor/acceptor role is filled by aspartate 148. ATP contacts are provided by residues histidine 208–glycine 212, aspartate 283–arginine 285, and glycine 331–asparagine 335. Glutamate 384 provides a ligand contact to Mg(2+).

The protein belongs to the acetokinase family. Homodimer. The cofactor is Mg(2+). Requires Mn(2+) as cofactor.

The protein localises to the cytoplasm. The enzyme catalyses acetate + ATP = acetyl phosphate + ADP. It participates in metabolic intermediate biosynthesis; acetyl-CoA biosynthesis; acetyl-CoA from acetate: step 1/2. Functionally, catalyzes the formation of acetyl phosphate from acetate and ATP. Can also catalyze the reverse reaction. The polypeptide is Acetate kinase (Methanosarcina acetivorans (strain ATCC 35395 / DSM 2834 / JCM 12185 / C2A)).